The sequence spans 72 residues: Protein RALF-like 20 (72 aa).

The first 27 residues, 1–27 (MVLSKKTIMQSFALMIILSIVMSTTEA), serve as a signal peptide directing secretion. 2 disulfide bridges follow: Cys43–Cys51 and Cys63–Cys69.

Belongs to the plant rapid alkalinization factor (RALF) family.

It is found in the secreted. Its function is as follows. Cell signaling peptide that may regulate plant stress, growth, and development. Mediates a rapid alkalinization of extracellular space by mediating a transient increase in the cytoplasmic Ca(2+) concentration leading to a calcium-dependent signaling events through a cell surface receptor and a concomitant activation of some intracellular mitogen-activated protein kinases. This chain is Protein RALF-like 20 (RALFL20), found in Arabidopsis thaliana (Mouse-ear cress).